The chain runs to 237 residues: Ribonuclease PH (237 aa).

Phosphate contacts are provided by residues Arg86 and 124–126 (GTR).

The protein belongs to the RNase PH family. As to quaternary structure, homohexameric ring arranged as a trimer of dimers.

It catalyses the reaction tRNA(n+1) + phosphate = tRNA(n) + a ribonucleoside 5'-diphosphate. Its function is as follows. Phosphorolytic 3'-5' exoribonuclease that plays an important role in tRNA 3'-end maturation. Removes nucleotide residues following the 3'-CCA terminus of tRNAs; can also add nucleotides to the ends of RNA molecules by using nucleoside diphosphates as substrates, but this may not be physiologically important. Probably plays a role in initiation of 16S rRNA degradation (leading to ribosome degradation) during starvation. The protein is Ribonuclease PH of Myxococcus xanthus (strain DK1622).